A 345-amino-acid polypeptide reads, in one-letter code: Anthranilate phosphoribosyltransferase (345 aa).

5-phospho-alpha-D-ribose 1-diphosphate is bound by residues Gly79, 82–83 (GD), Thr87, 89–92 (NVST), 106–114 (KHGNRAVSG), and Ser118. Gly79 provides a ligand contact to anthranilate. Ser91 contributes to the Mg(2+) binding site. Residue Asn109 coordinates anthranilate. Residue Arg164 coordinates anthranilate. Residues Asp223 and Glu224 each coordinate Mg(2+).

The protein belongs to the anthranilate phosphoribosyltransferase family. As to quaternary structure, homodimer. The cofactor is Mg(2+).

It carries out the reaction N-(5-phospho-beta-D-ribosyl)anthranilate + diphosphate = 5-phospho-alpha-D-ribose 1-diphosphate + anthranilate. The protein operates within amino-acid biosynthesis; L-tryptophan biosynthesis; L-tryptophan from chorismate: step 2/5. Its function is as follows. Catalyzes the transfer of the phosphoribosyl group of 5-phosphorylribose-1-pyrophosphate (PRPP) to anthranilate to yield N-(5'-phosphoribosyl)-anthranilate (PRA). The chain is Anthranilate phosphoribosyltransferase from Saccharolobus islandicus (strain M.16.27) (Sulfolobus islandicus).